The chain runs to 562 residues: Phosphoglucomutase-1 (562 aa).

At M1 the chain carries N-acetylmethionine. K16 is subject to N6-acetyllysine. R23 contacts alpha-D-glucose 1,6-bisphosphate. T115 carries the post-translational modification Phosphothreonine. Residue S117 participates in alpha-D-glucose 1,6-bisphosphate binding. S117 (phosphoserine intermediate) is an active-site residue. Residue S117 participates in Mg(2+) binding. Phosphoserine is present on residues S117 and S134. At T185 the chain carries Phosphothreonine. S213 is subject to Phosphoserine. Residues D288, D290, and D292 each coordinate Mg(2+). Alpha-D-glucose 1,6-bisphosphate-binding residues include D292 and R293. K349 carries the N6-acetyllysine modification. Y353 carries the post-translational modification Phosphotyrosine. T357 contacts alpha-D-glucose 1,6-bisphosphate. At S369 the chain carries Phosphoserine. Residues E376, S378, and K389 each contribute to the alpha-D-glucose 1,6-bisphosphate site. S378 is subject to Phosphoserine. Residue K419 is modified to N6-succinyllysine. The residue at position 467 (T467) is a Phosphothreonine; by PAK1. A phosphoserine mark is found at S477, S485, and S505. Residue T507 is modified to Phosphothreonine. 2 positions are modified to phosphoserine: S509 and S541.

This sequence belongs to the phosphohexose mutase family. As to quaternary structure, monomer. Requires Mg(2+) as cofactor. Phosphorylation at Thr-467 by PAK1 significantly enhances enzymatic activity.

The protein localises to the cytoplasm. It catalyses the reaction alpha-D-glucose 1-phosphate = alpha-D-glucose 6-phosphate. The catalysed reaction is O-phospho-L-seryl-[protein] + alpha-D-glucose 1-phosphate = alpha-D-glucose 1,6-bisphosphate + L-seryl-[protein]. It carries out the reaction alpha-D-glucose 1,6-bisphosphate + L-seryl-[protein] = O-phospho-L-seryl-[protein] + alpha-D-glucose 6-phosphate. In terms of biological role, catalyzes the reversible isomerization of alpha-D-glucose 1-phosphate to alpha-D-glucose 6-phosphate. The mechanism proceeds via the intermediate compound alpha-D-glucose 1,6-bisphosphate. This enzyme participates in both the breakdown and synthesis of glucose. In Bos taurus (Bovine), this protein is Phosphoglucomutase-1 (PGM1).